The following is a 3704-amino-acid chain: Fatty acid synthase 2 (3704 aa).

Positions 27–41 (AVSAHGSPPSSASPG) are enriched in low complexity. The interval 27–52 (AVSAHGSPPSSASPGPDDKAFSVDGT) is disordered. The tract at residues 216–475 (ALFGGQGNNH…QARIPFSKRK (260 aa)) is acetyltransferase (AT) domain. The tract at residues 639 to 887 (SRLLGKPPIM…LIASTQGCSD (249 aa)) is enoyl reductase (ER) domain. The interval 1216 to 1709 (GEQPSWIRAL…VPGDQLSVQL (494 aa)) is dehydratase (DH) domain. Positions 1624–1730 (PKTNEPYSRA…VQIDASNQRG (107 aa)) constitute a MaoC-like domain. The interval 1747 to 2112 (YVFTGQGSQA…IEHVSEVTRS (366 aa)) is malonyl/palmitoyl transferase (MT/PT) domain. Residues 2265 to 2343 (DERLDPLLTV…AALRPGYSGE (79 aa)) enclose the Carrier domain. Position 2303 is an O-(pantetheine 4'-phosphoryl)serine (serine 2303). Residues 2733-2969 (GLDVLLTGVG…LGLVEPEFAS (237 aa)) form a ketoreductase (KR) domain region. The region spanning 3176-3623 (QQEIELTHDL…QVGGIAMILH (448 aa)) is the Ketosynthase family 3 (KS3) domain. Active-site for beta-ketoacyl synthase activity residues include cysteine 3359, histidine 3506, and histidine 3547.

The protein in the N-terminal section; belongs to the fungal fatty acid synthetase subunit beta family. In the C-terminal section; belongs to the thiolase-like superfamily. Fungal fatty acid synthetase subunit alpha family.

Its pathway is secondary metabolite biosynthesis. Its function is as follows. Fatty acid synthase; part of the gene cluster that mediates the biosynthesis of the glycolipid biosurfactant ustilagic acid (UA). UA is a secreted cellobiose glycolipid that is toxic for many microorganisms and confers biocontrol activity to U.maydis. UA consists of 15,16-dihydroxypalmitic or 2,15,16-trihydroxypalmitic acid, which is O-glycosidically linked to cellobiose at its terminal hydroxyl group. In addition, the cellobiose moiety is acetylated and acylated with a short-chain hydroxy fatty acid. UA biosynthesis starts with omega-hydroxylation of palmitic acid catalyzed by the cytochrome P450 monooxygenase cyp1. Terminal hydroxylation of palmitic acid precedes subterminal hydroxylation catalyzed by the cytochrome P450 monooxygenase cyp2. Sequential glucosylation of the hydroxy fatty acid is probably catalyzed by the glycosyltransferase ugt1. The cellobiose lipid is further decorated by acetylation of the proximal glucose residue and by acylation with a short-chain beta-hydroxy fatty acid at the distal glucose residue. The acyltransferase uat1 may be a good candidate for catalyzing either acetylation or acylation of the cellobiose lipid. The fatty acid synthase fas2 may be involved in synthesis of the carbon backbone of the short-chain beta-hydroxy fatty acid esterified to the cellobiose disaccharide. The secreted UA consists of a mixture of both alpha-hydroxylated and non-hydroxylated glycolipids; therefore, alpha-hydroxylation of the long-chain fatty, catalyzed by the fatty acid hydroxylase ahd1, occurs late in UA biosynthesis and may be the last step before secretion. The chain is Fatty acid synthase 2 from Mycosarcoma maydis (Corn smut fungus).